The chain runs to 37 residues: Large ribosomal subunit protein bL36c (37 aa).

Belongs to the bacterial ribosomal protein bL36 family.

The protein resides in the plastid. Its subcellular location is the chloroplast. This Phaeodactylum tricornutum (strain CCAP 1055/1) protein is Large ribosomal subunit protein bL36c.